A 509-amino-acid chain; its full sequence is Probable basic-leucine zipper transcription factor H (509 aa).

The tract at residues 1-42 is disordered; that stretch reads MMNSPRSLDSSDGSVDSSSVYSGTSSFGSSFTSSTGSGFTNS. Positions 10–39 are enriched in low complexity; sequence SSDGSVDSSSVYSGTSSFGSSFTSSTGSGF. The 64-residue stretch at 50–113 folds into the bZIP domain; sequence AKKKKIRQMQ…NENYLKINQL (64 aa). Residues 51 to 77 form a basic motif region; that stretch reads KKKKIRQMQNRQSAAQYRERKKEYLEK. The leucine-zipper stretch occupies residues 78-99; that stretch reads LETIVDNLESDRNQLLQQTKQL. Disordered stretches follow at residues 134 to 185, 223 to 275, 290 to 414, and 465 to 509; these read LLSK…SNNG, FSHL…SRFN, IENV…IINN, and SNNN…GIPK. Composition is skewed to low complexity over residues 226 to 248, 255 to 269, 292 to 350, 361 to 414, 465 to 483, and 490 to 509; these read LQQQ…SPIP, PIQQ…QNIN, NVNN…SNRS, QQQQ…IINN, SNNN…NSPS, and NGGI…GIPK.

Belongs to the bZIP family.

The protein resides in the nucleus. In terms of biological role, probable transcriptional regulator. The sequence is that of Probable basic-leucine zipper transcription factor H (bzpH) from Dictyostelium discoideum (Social amoeba).